The sequence spans 297 residues: 4-hydroxy-tetrahydrodipicolinate synthase (297 aa).

T50 contacts pyruvate. The Proton donor/acceptor role is filled by Y138. K166 acts as the Schiff-base intermediate with substrate in catalysis. Residue I208 coordinates pyruvate.

Belongs to the DapA family. In terms of assembly, homotetramer; dimer of dimers.

It localises to the cytoplasm. It carries out the reaction L-aspartate 4-semialdehyde + pyruvate = (2S,4S)-4-hydroxy-2,3,4,5-tetrahydrodipicolinate + H2O + H(+). It participates in amino-acid biosynthesis; L-lysine biosynthesis via DAP pathway; (S)-tetrahydrodipicolinate from L-aspartate: step 3/4. Its function is as follows. Catalyzes the condensation of (S)-aspartate-beta-semialdehyde [(S)-ASA] and pyruvate to 4-hydroxy-tetrahydrodipicolinate (HTPA). In Haemophilus ducreyi (strain 35000HP / ATCC 700724), this protein is 4-hydroxy-tetrahydrodipicolinate synthase.